The following is a 464-amino-acid chain: Fumarate hydratase class II (464 aa).

Substrate contacts are provided by residues 98–100, Arg-126, 129–132, 139–141, and Thr-187; these read SGT, HPND, and SSN. The Proton donor/acceptor role is filled by His-188. Residue Ser-318 is part of the active site. Residues Ser-319 and 324-326 each bind substrate; that span reads KVN.

This sequence belongs to the class-II fumarase/aspartase family. Fumarase subfamily. In terms of assembly, homotetramer.

It is found in the cytoplasm. It carries out the reaction (S)-malate = fumarate + H2O. Its pathway is carbohydrate metabolism; tricarboxylic acid cycle; (S)-malate from fumarate: step 1/1. In terms of biological role, involved in the TCA cycle. Catalyzes the stereospecific interconversion of fumarate to L-malate. The sequence is that of Fumarate hydratase class II from Photorhabdus laumondii subsp. laumondii (strain DSM 15139 / CIP 105565 / TT01) (Photorhabdus luminescens subsp. laumondii).